Consider the following 397-residue polypeptide: Elongation factor Tu (397 aa).

The tr-type G domain occupies 10 to 207 (KPHVNIGTIG…ACDSYIPEPQ (198 aa)). The segment at 19–26 (GHIDHGKT) is G1. 19–26 (GHIDHGKT) serves as a coordination point for GTP. Thr26 contributes to the Mg(2+) binding site. Residues 60 to 64 (GITIA) form a G2 region. The interval 81–84 (DCPG) is G3. Residues 81 to 85 (DCPGH) and 136 to 139 (NKCD) contribute to the GTP site. The G4 stretch occupies residues 136-139 (NKCD). Residues 174–176 (SAL) are G5.

The protein belongs to the TRAFAC class translation factor GTPase superfamily. Classic translation factor GTPase family. EF-Tu/EF-1A subfamily. Monomer.

It is found in the cytoplasm. It carries out the reaction GTP + H2O = GDP + phosphate + H(+). GTP hydrolase that promotes the GTP-dependent binding of aminoacyl-tRNA to the A-site of ribosomes during protein biosynthesis. This Nitratidesulfovibrio vulgaris (strain ATCC 29579 / DSM 644 / CCUG 34227 / NCIMB 8303 / VKM B-1760 / Hildenborough) (Desulfovibrio vulgaris) protein is Elongation factor Tu.